We begin with the raw amino-acid sequence, 130 residues long: Small ribosomal subunit protein uS9 (130 aa).

It belongs to the universal ribosomal protein uS9 family.

The polypeptide is Small ribosomal subunit protein uS9 (Mycoplasmoides gallisepticum (strain R(low / passage 15 / clone 2)) (Mycoplasma gallisepticum)).